The primary structure comprises 408 residues: Histidine--tRNA ligase (408 aa).

Belongs to the class-II aminoacyl-tRNA synthetase family.

It localises to the cytoplasm. It catalyses the reaction tRNA(His) + L-histidine + ATP = L-histidyl-tRNA(His) + AMP + diphosphate + H(+). The sequence is that of Histidine--tRNA ligase from Methanospirillum hungatei JF-1 (strain ATCC 27890 / DSM 864 / NBRC 100397 / JF-1).